Reading from the N-terminus, the 227-residue chain is Cytidylate kinase (227 aa).

Gly-10–Thr-18 lines the ATP pocket.

Belongs to the cytidylate kinase family. Type 1 subfamily.

It is found in the cytoplasm. The enzyme catalyses CMP + ATP = CDP + ADP. The catalysed reaction is dCMP + ATP = dCDP + ADP. The sequence is that of Cytidylate kinase from Streptococcus agalactiae serotype III (strain NEM316).